Here is a 199-residue protein sequence, read N- to C-terminus: DnaJ homolog subfamily C member 5B (199 aa).

Phosphoserine is present on residues Ser-14 and Ser-16. Residues 19–84 form the J domain; it reads ALYEILGLHK…SKRNIYDKYG (66 aa).

In terms of assembly, interacts with the chaperone complex consisting of HSC70 and SGTA. Palmitoylated.

The protein localises to the membrane. The sequence is that of DnaJ homolog subfamily C member 5B (DNAJC5B) from Bos taurus (Bovine).